Reading from the N-terminus, the 130-residue chain is uncharacterized protein (130 aa).

Belongs to the HesB/IscA family.

This is an uncharacterized protein from Buchnera aphidicola subsp. Acyrthosiphon pisum (strain APS) (Acyrthosiphon pisum symbiotic bacterium).